The chain runs to 394 residues: Maltose permease (394 aa).

Over 1 to 11 (MGAAFKWGAAA) the chain is Cytoplasmic. Residues 12–38 (RKTVFPLFYFLIFFAFGALFPLLSVYL) form a helical membrane-spanning segment. Residues 39-45 (QEEARLS) lie on the Extracellular side of the membrane. A helical transmembrane segment spans residues 46–74 (GAAIGWIMSLPPIVTMAAQPLWGTAADYT). Residues 75–78 (RKPV) lie on the Cytoplasmic side of the membrane. Residues 79-104 (GLLLAALVLAALFGVMYALAGSYRLF) form a helical membrane-spanning segment. The Extracellular portion of the chain corresponds to 105-108 (VVLT). The helical transmembrane segment at 109–126 (VLLSAMQSAIVPLSDSLA) threads the bilayer. The Cytoplasmic portion of the chain corresponds to 127-137 (LRHVHEQGGNY). A helical transmembrane segment spans residues 138 to 160 (GAIRLWGSLGFAMAVLAVGWLSD). The Extracellular segment spans residues 161–163 (HIA). A helical transmembrane segment spans residues 164 to 183 (FAVIFYAFSLALLTAAALAT). Over 184-213 (RLPRYPMGAPGALTRQDVRGLLASRPFRLL) the chain is Cytoplasmic. Residues 214-233 (LVATFLLFGPILANNSYFGL) traverse the membrane as a helical segment. At 234 to 237 (LIHE) the chain is on the extracellular side. A helical transmembrane segment spans residues 238-262 (LGGTLTGIGLAFLFAAGSEAPFMKA). The Cytoplasmic portion of the chain corresponds to 263–272 (ADRLIGRFGM). The chain crosses the membrane as a helical span at residues 273–292 (VRLLLLAALISAARWLAYAA). Residues 293 to 295 (DPP) lie on the Extracellular side of the membrane. A helical transmembrane segment spans residues 296-318 (LWFVYMTTVVQGCSVGLAIPTAL). The Cytoplasmic segment spans residues 319-330 (QYARRLAPERVQ). A helical transmembrane segment spans residues 331-358 (STAVALYSAVGNGLGAWFCTLVGGYLLE). Residues 359–361 (RWQ) lie on the Extracellular side of the membrane. The chain crosses the membrane as a helical span at residues 362–382 (IGAVYLFFSICTIVGVLVLLL). The Cytoplasmic portion of the chain corresponds to 383 to 394 (LAKRERTAGEEK).

Belongs to the major facilitator superfamily.

It is found in the cell membrane. High affinity transport of maltose. This Geobacillus stearothermophilus (Bacillus stearothermophilus) protein is Maltose permease (malA).